The primary structure comprises 141 residues: Large-conductance mechanosensitive channel (141 aa).

The next 2 helical transmembrane spans lie at 21 to 41 and 85 to 105; these read VGVI…GDLI and GSFL…FMMV.

Belongs to the MscL family. Homopentamer.

It localises to the cell inner membrane. Functionally, channel that opens in response to stretch forces in the membrane lipid bilayer. May participate in the regulation of osmotic pressure changes within the cell. This is Large-conductance mechanosensitive channel from Dechloromonas aromatica (strain RCB).